Here is a 1316-residue protein sequence, read N- to C-terminus: DNA-directed RNA polymerase subunit beta' (1316 aa).

Zn(2+)-binding residues include cysteine 60, cysteine 62, cysteine 75, and cysteine 78. Mg(2+) is bound by residues aspartate 535, aspartate 537, and aspartate 539. Cysteine 891, cysteine 968, cysteine 975, and cysteine 978 together coordinate Zn(2+).

It belongs to the RNA polymerase beta' chain family. The RNAP catalytic core consists of 2 alpha, 1 beta, 1 beta' and 1 omega subunit. When a sigma factor is associated with the core the holoenzyme is formed, which can initiate transcription. It depends on Mg(2+) as a cofactor. Zn(2+) serves as cofactor.

The catalysed reaction is RNA(n) + a ribonucleoside 5'-triphosphate = RNA(n+1) + diphosphate. Its function is as follows. DNA-dependent RNA polymerase catalyzes the transcription of DNA into RNA using the four ribonucleoside triphosphates as substrates. This chain is DNA-directed RNA polymerase subunit beta', found in Mycolicibacterium paratuberculosis (strain ATCC BAA-968 / K-10) (Mycobacterium paratuberculosis).